The following is a 206-amino-acid chain: Ras-related protein Rab-7a (206 aa).

15–22 (GDSGVGKT) provides a ligand contact to GTP. Phosphoserine occurs at positions 17 and 23. Residues threonine 34, threonine 40, and threonine 64 each carry the phosphothreonine modification. GTP-binding positions include 34–40 (TQQYRAT) and 63–67 (DTAGQ). The short motif at 37-45 (YRATVGADF) is the Effector region element. Serine 72 carries the phosphoserine modification. Phosphotyrosine occurs at positions 78 and 88. GTP contacts are provided by residues 125-128 (NKLD) and 157-158 (AK). Residues cysteine 205 and cysteine 206 are each lipidated (S-geranylgeranyl cysteine).

This sequence belongs to the small GTPase superfamily. Rab family.

It is found in the cytoplasmic vesicle. The protein resides in the phagosome membrane. The protein localises to the late endosome membrane. It localises to the lysosome membrane. Its subcellular location is the autophagosome membrane. It is found in the lipid droplet. It catalyses the reaction GTP + H2O = GDP + phosphate + H(+). Functionally, small GTPase which cycles between active GTP-bound and inactive GDP-bound states. In its active state, binds to a variety of effector proteins playing a key role in the regulation of endo-lysosomal trafficking. Governs early-to-late endosomal maturation, microtubule minus-end as well as plus-end directed endosomal migration and positioning, and endosome-lysosome transport through different protein-protein interaction cascades. Involved in lipophagy, a cytosolic lipase-independent autophagic pathway. Plays a role in phagocyte formation and acidification. This is Ras-related protein Rab-7a from Paramecium octaurelia.